A 253-amino-acid chain; its full sequence is Phosphate import ATP-binding protein PstB 1 (253 aa).

Positions Leu7–Ile248 constitute an ABC transporter domain. Residue Gly39 to Ser46 participates in ATP binding.

It belongs to the ABC transporter superfamily. Phosphate importer (TC 3.A.1.7) family. In terms of assembly, the complex is composed of two ATP-binding proteins (PstB), two transmembrane proteins (PstC and PstA) and a solute-binding protein (PstS).

The protein resides in the cell membrane. It catalyses the reaction phosphate(out) + ATP + H2O = ADP + 2 phosphate(in) + H(+). Its function is as follows. Part of the ABC transporter complex PstSACB involved in phosphate import. Responsible for energy coupling to the transport system. The polypeptide is Phosphate import ATP-binding protein PstB 1 (Streptococcus pyogenes serotype M12 (strain MGAS9429)).